Reading from the N-terminus, the 245-residue chain is 1-(5-phosphoribosyl)-5-[(5-phosphoribosylamino)methylideneamino] imidazole-4-carboxamide isomerase (245 aa).

Asp-8 (proton acceptor) is an active-site residue. The active-site Proton donor is the Asp-131.

The protein belongs to the HisA/HisF family.

It is found in the cytoplasm. The enzyme catalyses 1-(5-phospho-beta-D-ribosyl)-5-[(5-phospho-beta-D-ribosylamino)methylideneamino]imidazole-4-carboxamide = 5-[(5-phospho-1-deoxy-D-ribulos-1-ylimino)methylamino]-1-(5-phospho-beta-D-ribosyl)imidazole-4-carboxamide. The protein operates within amino-acid biosynthesis; L-histidine biosynthesis; L-histidine from 5-phospho-alpha-D-ribose 1-diphosphate: step 4/9. The sequence is that of 1-(5-phosphoribosyl)-5-[(5-phosphoribosylamino)methylideneamino] imidazole-4-carboxamide isomerase from Verminephrobacter eiseniae (strain EF01-2).